The chain runs to 598 residues: MSIISMNVSILSKPLNCLHNLERRPSKALLVPCTAPTARLRASCSSKLQEAHQIRRSGNYQPALWDSNYIQSLNTPYTEERHLDRKAELIVQVRILLKEKMEPVQQLELIHDLKYLGLSDFFQDEIKEILGVIYNEHKCFHNNEVEKMDLYFTALGFRLLRQHGFNISQDVFNCFKNEKGIDFKASLAQDTKGMLQLYEASFLLRKGEDTLELAREFATKCLQKKLDEGGNEIDENLLLWIRHSLDLPLHWRIQSVEARWFIDAYARRPDMNPLIFELAKLNFNIIQATHQQELKDLSRWWSRLCFPEKLPFVRDRLVESFFWAVGMFEPHQHGYQRKMAATIIVLATVIDDIYDVYGTLDELELFTDTFKRWDTESITRLPYYMQLCYWGVHNYISDAAYDILKEHGFFCLQYLRKSVVDLVEAYFHEAKWYHSGYTPSLDEYLNIAKISVASPAIISPTYFTFANASHDTAVIDSLYQYHDILCLAGIILRLPDDLGTSYFELARGDVPKTIQCYMKETNASEEEAVEHVKFLIREAWKDMNTAIAAGYPFPDGMVAGAANIGRVAQFIYLHGDGFGVQHSKTYEHIAGLLFEPYA.

The N-terminal 54 residues, 1-54 (MSIISMNVSILSKPLNCLHNLERRPSKALLVPCTAPTARLRASCSSKLQEAHQI), are a transit peptide targeting the chloroplast. R314 contributes to the substrate binding site. Residues D351 and D355 each coordinate Mg(2+). The short motif at 351–355 (DDIYD) is the DDXXD motif element. R493 serves as a coordination point for substrate. Residues D496, T500, and E504 each contribute to the Mg(2+) site. Residue T500 coordinates substrate. K512 contributes to the substrate binding site.

Belongs to the terpene synthase family. In terms of assembly, homodimer. Mg(2+) is required as a cofactor.

It is found in the plastid. The protein localises to the chloroplast. It catalyses the reaction (2E)-geranyl diphosphate = (2S,4R)-bornyl diphosphate. The catalysed reaction is (2E)-geranyl diphosphate = (1R,4S)-camphene + diphosphate. It carries out the reaction (2E)-geranyl diphosphate = (1R,5R)-alpha-pinene + diphosphate. It participates in terpene metabolism; (R)-camphor biosynthesis. In terms of biological role, catalyzes the formation of the (+)-camphor precursor (+)-bornyl diphosphate from geranyl diphosphate. The enzyme also produces significant amounts of (+)-alpha-pinene, (+)-camphene, and (+-)-limonene. The chain is (+)-bornyl diphosphate synthase, chloroplastic from Salvia officinalis (Sage).